The primary structure comprises 76 residues: DNA-directed RNA polymerase subunit epsilon (76 aa).

The protein belongs to the RNA polymerase subunit epsilon family. In terms of assembly, RNAP is composed of a core of 2 alpha, a beta and a beta' subunit. The core is associated with a delta subunit, and at least one of epsilon or omega. When a sigma factor is associated with the core the holoenzyme is formed, which can initiate transcription.

It carries out the reaction RNA(n) + a ribonucleoside 5'-triphosphate = RNA(n+1) + diphosphate. Its function is as follows. A non-essential component of RNA polymerase (RNAP). The sequence is that of DNA-directed RNA polymerase subunit epsilon from Streptococcus thermophilus (strain CNRZ 1066).